Reading from the N-terminus, the 226-residue chain is MLVEDDHSISEMVDHYLTKEGFGIVHAFDGEEGIRLFQQGSYDLVLLDIMLPKLNGMDFLKIIREKSNIPVLMISAKDGDVDKALGLGFGADDYIAKPFSMIELTARVKAAIRRATQYSAEEPAVNKVIRIHQLAIDIDNVSVLKNGEPLQLTSTEWQLLCLFASNPKKVFTKEQIYRSVWNEEYFDDQNIINVHMRRLREKIEDDPSSPQYIKTLWGIGYKLGEF.

Positions 1–112 (MLVEDDHSIS…ELTARVKAAI (112 aa)) constitute a Response regulatory domain. D48 is modified (4-aspartylphosphate). The ompR/PhoB-type DNA-binding region spans 126–225 (NKVIRIHQLA…LWGIGYKLGE (100 aa)).

Phosphorylated by YcbM.

Its subcellular location is the cytoplasm. Member of the two-component regulatory system YcbM/YcbL. This is an uncharacterized protein from Bacillus subtilis (strain 168).